The chain runs to 358 residues: MATH domain and coiled-coil domain-containing protein At3g58440 (358 aa).

An MATH domain is found at 8-131 (QDKFTWVLEK…NDRLTIVAEV (124 aa)). Positions 250-309 (LRDAGFKVDWLEKKLDQLKEKKEEEMSGLARLHEIEERLQKLKLLFVDLESQLQKEKVEA) form a coiled coil.

This Arabidopsis thaliana (Mouse-ear cress) protein is MATH domain and coiled-coil domain-containing protein At3g58440.